We begin with the raw amino-acid sequence, 259 residues long: Carbonic anhydrase 1 (259 aa).

The residue at position 1 (alanine 1) is an N-acetylalanine. In terms of domain architecture, Alpha-carbonic anhydrase spans 2 to 258; the sequence is HAWGYGPTDG…LKGRHVRASF (257 aa). Histidine 63 acts as the Proton donor/acceptor in catalysis. Residues histidine 93, histidine 95, and histidine 118 each coordinate Zn(2+). Substrate contacts are provided by residues threonine 197 and 197–198; that span reads TT.

This sequence belongs to the alpha-carbonic anhydrase family. It depends on Zn(2+) as a cofactor.

The protein localises to the cytoplasm. The catalysed reaction is hydrogencarbonate + H(+) = CO2 + H2O. In terms of biological role, catalyzes the reversible hydration of carbon dioxide. This chain is Carbonic anhydrase 1 (ca1), found in Chionodraco hamatus (Antarctic teleost icefish).